The following is a 197-amino-acid chain: Imidazoleglycerol-phosphate dehydratase (197 aa).

It belongs to the imidazoleglycerol-phosphate dehydratase family.

It is found in the cytoplasm. It catalyses the reaction D-erythro-1-(imidazol-4-yl)glycerol 3-phosphate = 3-(imidazol-4-yl)-2-oxopropyl phosphate + H2O. It functions in the pathway amino-acid biosynthesis; L-histidine biosynthesis; L-histidine from 5-phospho-alpha-D-ribose 1-diphosphate: step 6/9. This chain is Imidazoleglycerol-phosphate dehydratase, found in Novosphingobium aromaticivorans (strain ATCC 700278 / DSM 12444 / CCUG 56034 / CIP 105152 / NBRC 16084 / F199).